Here is a 384-residue protein sequence, read N- to C-terminus: Anhydro-N-acetylmuramic acid kinase (384 aa).

17–24 contributes to the ATP binding site; sequence GTSMDGVD.

Belongs to the anhydro-N-acetylmuramic acid kinase family.

The catalysed reaction is 1,6-anhydro-N-acetyl-beta-muramate + ATP + H2O = N-acetyl-D-muramate 6-phosphate + ADP + H(+). It participates in amino-sugar metabolism; 1,6-anhydro-N-acetylmuramate degradation. The protein operates within cell wall biogenesis; peptidoglycan recycling. In terms of biological role, catalyzes the specific phosphorylation of 1,6-anhydro-N-acetylmuramic acid (anhMurNAc) with the simultaneous cleavage of the 1,6-anhydro ring, generating MurNAc-6-P. Is required for the utilization of anhMurNAc either imported from the medium or derived from its own cell wall murein, and thus plays a role in cell wall recycling. This Burkholderia thailandensis (strain ATCC 700388 / DSM 13276 / CCUG 48851 / CIP 106301 / E264) protein is Anhydro-N-acetylmuramic acid kinase.